Here is a 471-residue protein sequence, read N- to C-terminus: Trigger factor (471 aa).

Residues 174–261 (GDVAVVSFEG…VKDLKTRELP (88 aa)) form the PPIase FKBP-type domain. The span at 436-446 (ETLPKTKSLNG) shows a compositional bias: polar residues. Residues 436–471 (ETLPKTKSLNGKPSTQGKTSQSKSKKTKTKVEKTTK) form a disordered region. The span at 447 to 457 (KPSTQGKTSQS) shows a compositional bias: low complexity.

Belongs to the FKBP-type PPIase family. Tig subfamily.

The protein resides in the cytoplasm. It carries out the reaction [protein]-peptidylproline (omega=180) = [protein]-peptidylproline (omega=0). Involved in protein export. Acts as a chaperone by maintaining the newly synthesized protein in an open conformation. Functions as a peptidyl-prolyl cis-trans isomerase. This is Trigger factor from Prochlorococcus marinus (strain MIT 9211).